Reading from the N-terminus, the 153-residue chain is Interleukin-4 (153 aa).

Positions 1–24 are cleaved as a signal peptide; that stretch reads MGLTSQLLPPLFFLLACAGNFAHG. 3 disulfide bridges follow: Cys-27–Cys-151, Cys-48–Cys-89, and Cys-70–Cys-123. An N-linked (GlcNAc...) asparagine glycan is attached at Asn-62.

This sequence belongs to the IL-4/IL-13 family.

The protein localises to the secreted. Functionally, participates in at least several B-cell activation processes as well as of other cell types. It is a costimulator of DNA-synthesis. It induces the expression of class II MHC molecules on resting B-cells. It enhances both secretion and cell surface expression of IgE and IgG1. It also regulates the expression of the low affinity Fc receptor for IgE (CD23) on both lymphocytes and monocytes. Positively regulates IL31RA expression in macrophages. Stimulates autophagy in dendritic cells by interfering with mTORC1 signaling and through the induction of RUFY4. In Papio anubis (Olive baboon), this protein is Interleukin-4 (IL4).